Here is an 84-residue protein sequence, read N- to C-terminus: Small ribosomal subunit protein bS18A (84 aa).

This sequence belongs to the bacterial ribosomal protein bS18 family. Part of the 30S ribosomal subunit. Forms a tight heterodimer with protein bS6.

In terms of biological role, binds as a heterodimer with protein bS6 to the central domain of the 16S rRNA, where it helps stabilize the platform of the 30S subunit. The sequence is that of Small ribosomal subunit protein bS18A from Frankia alni (strain DSM 45986 / CECT 9034 / ACN14a).